The following is a 321-amino-acid chain: Coproporphyrin III ferrochelatase (321 aa).

Positions 185 and 267 each coordinate Fe(2+).

The protein belongs to the ferrochelatase family.

The protein localises to the cytoplasm. It catalyses the reaction Fe-coproporphyrin III + 2 H(+) = coproporphyrin III + Fe(2+). It functions in the pathway porphyrin-containing compound metabolism; protoheme biosynthesis. Functionally, involved in coproporphyrin-dependent heme b biosynthesis. Catalyzes the insertion of ferrous iron into coproporphyrin III to form Fe-coproporphyrin III. The protein is Coproporphyrin III ferrochelatase of Lacticaseibacillus casei (strain BL23) (Lactobacillus casei).